A 200-amino-acid polypeptide reads, in one-letter code: Small ribosomal subunit protein eS8A (200 aa).

The interval 1-31 is disordered; it reads MGISRDSRHKRSATGAKRAQFRKKRKFELGR. Position 62 is a phosphothreonine (Thr-62). Phosphoserine occurs at positions 66, 69, 73, and 86. The residue at position 107 (Thr-107) is a Phosphothreonine. Phosphoserine occurs at positions 154, 155, 158, and 161.

It belongs to the eukaryotic ribosomal protein eS8 family. In terms of assembly, component of the small ribosomal subunit (SSU). Mature yeast ribosomes consist of a small (40S) and a large (60S) subunit. The 40S small subunit contains 1 molecule of ribosomal RNA (18S rRNA) and 33 different proteins (encoded by 57 genes). The large 60S subunit contains 3 rRNA molecules (25S, 5.8S and 5S rRNA) and 46 different proteins (encoded by 81 genes).

It is found in the cytoplasm. Component of the ribosome, a large ribonucleoprotein complex responsible for the synthesis of proteins in the cell. The small ribosomal subunit (SSU) binds messenger RNAs (mRNAs) and translates the encoded message by selecting cognate aminoacyl-transfer RNA (tRNA) molecules. The large subunit (LSU) contains the ribosomal catalytic site termed the peptidyl transferase center (PTC), which catalyzes the formation of peptide bonds, thereby polymerizing the amino acids delivered by tRNAs into a polypeptide chain. The nascent polypeptides leave the ribosome through a tunnel in the LSU and interact with protein factors that function in enzymatic processing, targeting, and the membrane insertion of nascent chains at the exit of the ribosomal tunnel. The chain is Small ribosomal subunit protein eS8A from Saccharomyces cerevisiae (strain ATCC 204508 / S288c) (Baker's yeast).